The primary structure comprises 421 residues: Testin (421 aa).

The 108-residue stretch at Met92 to Asp199 folds into the PET domain. Residues Gln135–His165 form a disordered region. Basic and acidic residues predominate over residues Leu154–His165. LIM zinc-binding domains lie at Tyr234 to Glu297, Pro299 to Val359, and Gln362 to Ser421.

The protein belongs to the prickle / espinas / testin family. In terms of assembly, interacts via LIM domain 1 with ZYX. Interacts (via LIM domain 3) with ENAH and VASP. Interacts with ALKBH4, talin, actin, alpha-actinin, GRIP1 and PXN. Interacts (via LIM domain 2) with ACTL7A (via N-terminus). Heterodimer with ACTL7A; the heterodimer interacts with ENAH to form a heterotrimer.

The protein resides in the cytoplasm. Its subcellular location is the cell junction. It is found in the focal adhesion. Functionally, scaffold protein that may play a role in cell adhesion, cell spreading and in the reorganization of the actin cytoskeleton. Plays a role in the regulation of cell proliferation. May act as a tumor suppressor. This is Testin (TES) from Dasypus novemcinctus (Nine-banded armadillo).